The chain runs to 1040 residues: Isoleucine--tRNA ligase (1040 aa).

The 'HIGH' region motif lies at 47 to 57; that stretch reads PYCSGSIHLGT. The 'KMSKS' region signature appears at 605 to 609; it reads KMSKS. K608 is an ATP binding site.

The protein belongs to the class-I aminoacyl-tRNA synthetase family. IleS type 2 subfamily. Monomer. It depends on Zn(2+) as a cofactor.

Its subcellular location is the cytoplasm. It catalyses the reaction tRNA(Ile) + L-isoleucine + ATP = L-isoleucyl-tRNA(Ile) + AMP + diphosphate. Its function is as follows. Catalyzes the attachment of isoleucine to tRNA(Ile). As IleRS can inadvertently accommodate and process structurally similar amino acids such as valine, to avoid such errors it has two additional distinct tRNA(Ile)-dependent editing activities. One activity is designated as 'pretransfer' editing and involves the hydrolysis of activated Val-AMP. The other activity is designated 'posttransfer' editing and involves deacylation of mischarged Val-tRNA(Ile). In Methanococcus aeolicus (strain ATCC BAA-1280 / DSM 17508 / OCM 812 / Nankai-3), this protein is Isoleucine--tRNA ligase.